The following is a 216-amino-acid chain: uncharacterized protein (216 aa).

4Fe-4S ferredoxin-type domains follow at residues D160–K189 and E188–P216. [4Fe-4S] cluster-binding residues include C169, C172, C175, C179, C197, C200, C203, and C207.

Belongs to the FrhG family.

This is an uncharacterized protein from Methanocaldococcus jannaschii (strain ATCC 43067 / DSM 2661 / JAL-1 / JCM 10045 / NBRC 100440) (Methanococcus jannaschii).